A 388-amino-acid chain; its full sequence is Probable peptidoglycan glycosyltransferase FtsW (388 aa).

Over 1 to 19 the chain is Cytoplasmic; that stretch reads MSAAAPKPRPAHRFHIDQT. The helical transmembrane segment at 20 to 40 threads the bilayer; that stretch reads LLSVCLCLLGIGFVMVASSSM. The Periplasmic segment spans residues 41-57; sequence HLGVKMADDVSYYPFKQ. The chain crosses the membrane as a helical span at residues 58–78; sequence LVHIILGLMFAAAILAIPMKY. The Cytoplasmic portion of the chain corresponds to 79-85; that stretch reads WQKIGQP. A helical membrane pass occupies residues 86-106; the sequence is LFIVGLVLLLVVLIPGVGVKV. Residues 107 to 117 are Periplasmic-facing; sequence NGSTRWLSLLG. A helical membrane pass occupies residues 118–137; it reads LRIQVSEVMKFISVVYMAGY. Over 138 to 147 the chain is Cytoplasmic; the sequence is ITRHSDHVRH. The helical transmembrane segment at 148 to 168 threads the bilayer; it reads SIFGLLRPLMLLSVASILLLL. Residues 169-170 lie on the Periplasmic side of the membrane; it reads EP. The chain crosses the membrane as a helical span at residues 171 to 191; sequence DFGSAVVILIIAMGMMFLGGA. Residue arginine 192 is a topological domain, cytoplasmic. Residues 193 to 213 traverse the membrane as a helical segment; sequence LSPFVALVALISSAGAILASS. Over 214 to 271 the chain is Periplasmic; sequence ADYRVKRMTSFLNPWEHARDSGYQLTQALISFGRGEVSGVGLGNGLQKLFYLPEAHTD. A helical membrane pass occupies residues 272–292; that stretch reads FLFSVLGEELGLVGVTLVIAL. The Cytoplasmic segment spans residues 293-315; sequence FTTLVVRGFSIGEQAEAAGERFS. Residues 316 to 336 traverse the membrane as a helical segment; sequence ALVAYGLVIWFGFQAFVNMGV. Residues 337–348 lie on the Periplasmic side of the membrane; that stretch reads NMGILPTKGLTL. A helical membrane pass occupies residues 349-369; sequence PLMSYGGGSMIVMCGAMAVLF. Residues 370–388 are Cytoplasmic-facing; it reads RIHYEVTELHKSNIKGKSR.

The protein belongs to the SEDS family. FtsW subfamily.

Its subcellular location is the cell inner membrane. The enzyme catalyses [GlcNAc-(1-&gt;4)-Mur2Ac(oyl-L-Ala-gamma-D-Glu-L-Lys-D-Ala-D-Ala)](n)-di-trans,octa-cis-undecaprenyl diphosphate + beta-D-GlcNAc-(1-&gt;4)-Mur2Ac(oyl-L-Ala-gamma-D-Glu-L-Lys-D-Ala-D-Ala)-di-trans,octa-cis-undecaprenyl diphosphate = [GlcNAc-(1-&gt;4)-Mur2Ac(oyl-L-Ala-gamma-D-Glu-L-Lys-D-Ala-D-Ala)](n+1)-di-trans,octa-cis-undecaprenyl diphosphate + di-trans,octa-cis-undecaprenyl diphosphate + H(+). Its pathway is cell wall biogenesis; peptidoglycan biosynthesis. Peptidoglycan polymerase that is essential for cell division. This is Probable peptidoglycan glycosyltransferase FtsW from Methylomonas methanica (strain DSM 25384 / MC09).